We begin with the raw amino-acid sequence, 228 residues long: Urease accessory protein UreF (228 aa).

This sequence belongs to the UreF family. As to quaternary structure, ureD, UreF and UreG form a complex that acts as a GTP-hydrolysis-dependent molecular chaperone, activating the urease apoprotein by helping to assemble the nickel containing metallocenter of UreC. The UreE protein probably delivers the nickel.

It localises to the cytoplasm. Required for maturation of urease via the functional incorporation of the urease nickel metallocenter. This Yersinia enterocolitica serotype O:8 / biotype 1B (strain NCTC 13174 / 8081) protein is Urease accessory protein UreF.